The primary structure comprises 271 residues: Probable L,D-transpeptidase 3 (271 aa).

The 144-residue stretch at 127-270 (VVGVASISQH…VDIGDPVIVQ (144 aa)) folds into the L,D-TPase catalytic domain. His-228 acts as the Proton donor/acceptor in catalysis. The active-site Nucleophile is the Cys-246.

Its pathway is cell wall biogenesis; peptidoglycan biosynthesis. Is irreversibly inactivated by the beta-lactam carbapenems via the formation of a covalent adduct resulting from acylation of the catalytic Cys. Imipenem is the most efficient drug for in vitro LdtMt3/Rv1433 inactivation. In terms of biological role, probable L,D-transpeptidase that may perform as-yet-unknown cross-linking reactions in M.tuberculosis. Is not able to generate 3-&gt;3 cross-links in peptidoglycan, using tetrapeptide stems as acyl donor substrates. May function in the anchoring of proteins to peptidoglycan. The protein is Probable L,D-transpeptidase 3 of Mycobacterium tuberculosis (strain ATCC 25618 / H37Rv).